The chain runs to 208 residues: Protein-L-isoaspartate O-methyltransferase (208 aa).

The active site involves Ser59.

Belongs to the methyltransferase superfamily. L-isoaspartyl/D-aspartyl protein methyltransferase family.

The protein localises to the cytoplasm. The catalysed reaction is [protein]-L-isoaspartate + S-adenosyl-L-methionine = [protein]-L-isoaspartate alpha-methyl ester + S-adenosyl-L-homocysteine. Functionally, catalyzes the methyl esterification of L-isoaspartyl residues in peptides and proteins that result from spontaneous decomposition of normal L-aspartyl and L-asparaginyl residues. It plays a role in the repair and/or degradation of damaged proteins. The protein is Protein-L-isoaspartate O-methyltransferase of Erwinia tasmaniensis (strain DSM 17950 / CFBP 7177 / CIP 109463 / NCPPB 4357 / Et1/99).